The primary structure comprises 427 residues: Histidine--tRNA ligase (427 aa).

Belongs to the class-II aminoacyl-tRNA synthetase family. In terms of assembly, homodimer.

Its subcellular location is the cytoplasm. It catalyses the reaction tRNA(His) + L-histidine + ATP = L-histidyl-tRNA(His) + AMP + diphosphate + H(+). In Chloroherpeton thalassium (strain ATCC 35110 / GB-78), this protein is Histidine--tRNA ligase.